Consider the following 593-residue polypeptide: ATPase family AAA domain-containing protein 3-B (593 aa).

3 disordered regions span residues 1–64 (MSWL…LDQS), 109–129 (EEKR…AQYQ), and 145–164 (QLQN…KQEA). At 1 to 242 (MSWLFGLNRG…FRTFISDWDK (242 aa)) the chain is on the mitochondrial intermembrane side. Over residues 12–27 (PEPPGVPGFPEPPSPP) the composition is skewed to pro residues. Basic and acidic residues-rich tracts occupy residues 33–44 (GGDKNRPKDKWS), 53–64 (RAAKAARELDQS), 109–121 (EEKR…ETKQ), and 150–164 (ENLR…KQEA). A coiled-coil region spans residues 51–215 (LERAAKAARE…QIRLKAAEHR (165 aa)). The helical transmembrane segment at 243–260 (VTATVAGLTLLAVGVYTA) threads the bilayer. The Mitochondrial matrix segment spans residues 261–593 (KNGTGVAGRY…LQPLLEGTPV (333 aa)). 348 to 355 (GPPGTGKT) lines the ATP pocket. The segment covering 570-580 (AEGKESTKEIG) has biased composition (basic and acidic residues). The interval 570–593 (AEGKESTKEIGKNPLQPLLEGTPV) is disordered.

It belongs to the AAA ATPase family. Can form homooligomers. Homodimer formation at the N-terminus may be regulated by ATP and is required for the interaction with the inner surface of the mitochondrial outer membrane and correct mitochondrial homeostasis.

The protein resides in the mitochondrion inner membrane. Its subcellular location is the mitochondrion matrix. It is found in the mitochondrion nucleoid. It catalyses the reaction ATP + H2O = ADP + phosphate + H(+). Its function is as follows. Essential for mitochondrial network organization, mitochondrial metabolism and cell growth at organism and cellular level. May play an important role in mitochondrial protein synthesis. May also participate in mitochondrial DNA replication. May bind to mitochondrial DNA D-loops and contribute to nucleoid stability. Required for enhanced channeling of cholesterol for hormone-dependent steroidogenesis. Involved in mitochondrial-mediated antiviral innate immunity. Required to protect mitochondria from the PERK-mediated unfolded protein response: specifically inhibits the activity of EIF2AK3/PERK at mitochondria-endoplasmic reticulum contact sites, thereby providing a safe haven for mitochondrial protein translation during endoplasmic reticulum stress. Ability to inhibit EIF2AK3/PERK is independent of its ATPase activity. Also involved in the mitochondrial DNA damage response by promoting signaling between damaged genomes and the mitochondrial membrane, leading to activation of the integrated stress response (ISR). This chain is ATPase family AAA domain-containing protein 3-B (atad3-b), found in Xenopus laevis (African clawed frog).